The chain runs to 1039 residues: MEKLDRYLQENFDVPAKNPSEEAQRRWRQAVGTIVKNRRRRFRWVPDLERRSLDKAKVRSTQEKIRVALYVQQAALIFSDGAKKKEYKLTGDIIKAGYAINPDELALITSKHDSKALKMHGGVDGISIKVRSSFDHGIYASELDTRQNIYGVNRYAEKPSRSFWMFVWDALQDMTLIILMVCALLSVAVGLATEGWPKGMYDGLGIILSIFLVVMVTAVSDYKQSLQFKELDNEKKKIFIHVTRDGRRQKISIYDLVVGDIVHLSIGDQVPADGLYIHGYSLLIDESSLSGESDPVYVSQDKPFILAGTKVQDGSAKMIVTAVGMRTEWGKLMSTLSEGGEDETPLQVKLNGVATIIGKIGLVFAILTFLVLLVRFLIDKGMTVGLLKWYSTDALTIVNYFATAVTIIVVAVPEGLPLAVTLSLAFAMKKLMNDKALVRHLSACETMGSAGTICTDKTGTLTTNHMVVDKIWISEVSKSVTSNTISGELNSVVSSSTLSLLLQGIFENTSAEVVKEKDGKQTVLGTPTERAILEFGLGLKGDHDAEYRACTKVKVEPFNSVKKKMAVLISLPNGTSRWFCKGASEIILQMCDMMVDGDGNAIPLSEAQRKNILDTINSFASDALRTLCLAYKEVDDDIDDNADSPTSGFTLIAIFGIKDPVRPGVKDAVKTCMSAGITVRMVTGDNINTAKAIAKECGILTEDGVAIEGPEFHSKSTEEMRDLILNIQVMARSLPLDKHTLVTNLRGMFDEVVSVTGDGTNDAPALHEADIGLAMGIAGTEVAKESADVIVLDDNFTTIINVARWGRAVYINIQKFVQFQLTVNIVALVINFVSACIIGSAPLTAVQLLWVNMIMDTLGALALATEPPNDEMMKRPPVRKGESFITKFMWRNIMGQSLYQLFVLGALMFGGERLLNIKGADSKSIINTLIFNSFVFCQVFNEINSREMQKINVFRGIISNWIFIAVIAATVAFQVVIIEFLGTFASTVPLNWQHWLLSVGLGSISLIVGVILKCIPVGSGETSATPNGYRPLANGPDDI.

Topologically, residues 1-175 are cytoplasmic; the sequence is MEKLDRYLQE…FVWDALQDMT (175 aa). The next 2 helical transmembrane spans lie at 176–196 and 199–219; these read LIIL…TEGW and GMYD…VTAV. The Cytoplasmic portion of the chain corresponds to 220–250; that stretch reads SDYKQSLQFKELDNEKKKIFIHVTRDGRRQK. The next 2 helical transmembrane spans lie at 251–271 and 353–373; these read ISIY…DQVP and VATI…LVLL. The Cytoplasmic segment spans residues 374–406; sequence VRFLIDKGMTVGLLKWYSTDALTIVNYFATAVT. A helical membrane pass occupies residues 407-427; the sequence is IIVVAVPEGLPLAVTLSLAFA. Asp456 functions as the 4-aspartylphosphate intermediate in the catalytic mechanism. Asp758 and Asp762 together coordinate Mg(2+). A helical membrane pass occupies residues 825 to 845; sequence IVALVINFVSACIIGSAPLTA. Topologically, residues 846–847 are cytoplasmic; the sequence is VQ. The next 2 helical transmembrane spans lie at 848–868 and 892–912; these read LLWV…TEPP and NIMG…FGGE. Residues 913 to 960 are Cytoplasmic-facing; sequence RLLNIKGADSKSIINTLIFNSFVFCQVFNEINSREMQKINVFRGIISN. The next 2 helical transmembrane spans lie at 961–981 and 995–1015; these read WIFI…IEFL and WLLS…LKCI. Over 1016 to 1039 the chain is Cytoplasmic; sequence PVGSGETSATPNGYRPLANGPDDI.

The protein belongs to the cation transport ATPase (P-type) (TC 3.A.3) family. Type IIB subfamily.

The protein resides in the membrane. It carries out the reaction Ca(2+)(in) + ATP + H2O = Ca(2+)(out) + ADP + phosphate + H(+). With respect to regulation, activated by calmodulin. In terms of biological role, this magnesium-dependent enzyme catalyzes the hydrolysis of ATP coupled with the translocation of calcium from the cytosol out of the cell, into the endoplasmic reticulum, or into organelles. In Oryza sativa subsp. japonica (Rice), this protein is Probable calcium-transporting ATPase 9, plasma membrane-type.